The sequence spans 120 residues: MTENRRIKKVNSLLREAIANVILKDVKHPKISNRWITVTRVCLSKDLHSARVYVSIMPHENTSTETLEALKASARYIAYKASKGVVLKYFPEINFYLEDIFSPQDHIENLLWKIREQDKN.

It belongs to the RbfA family. In terms of assembly, monomer. Binds 30S ribosomal subunits, but not 50S ribosomal subunits or 70S ribosomes.

It localises to the cytoplasm. One of several proteins that assist in the late maturation steps of the functional core of the 30S ribosomal subunit. Associates with free 30S ribosomal subunits (but not with 30S subunits that are part of 70S ribosomes or polysomes). Required for efficient processing of 16S rRNA. May interact with the 5'-terminal helix region of 16S rRNA. The polypeptide is Ribosome-binding factor A (Chlamydia abortus (strain DSM 27085 / S26/3) (Chlamydophila abortus)).